Reading from the N-terminus, the 271-residue chain is Delta(3,5)-Delta(2,4)-dienoyl-CoA isomerase (271 aa).

Substrate contacts are provided by residues 62-66 (SGGKF) and L120. E152 functions as the Proton donor/acceptor in the catalytic mechanism. The Peroxisome targeting signal (PTS1) signature appears at 269 to 271 (HKL).

This sequence belongs to the enoyl-CoA hydratase/isomerase family. In terms of assembly, interacts with ECI1.

Its subcellular location is the peroxisome. The catalysed reaction is a (3E,5Z)-dienoyl-CoA = a (2E,4E)-(5,6-saturated)-dienoyl-CoA. It functions in the pathway lipid metabolism; fatty acid beta-oxidation. Peroxisomal di-isomerase that is involved in fatty acid metabolism enzyme by converting 3,5-dienoyl-CoAs to the corresponding 2,4-dienoyl-CoAs. Required for ECI1 to be located to the peroxisome. In Saccharomyces cerevisiae (strain ATCC 204508 / S288c) (Baker's yeast), this protein is Delta(3,5)-Delta(2,4)-dienoyl-CoA isomerase.